A 622-amino-acid chain; its full sequence is Histone-arginine methyltransferase CARMER (622 aa).

The SAM-dependent MTase PRMT-type domain occupies 118–425; the sequence is ASQYFQFYGY…QRQSYDVEID (308 aa). S-adenosyl-L-methionine-binding residues include Gln-131, Arg-140, Gly-164, Glu-186, Glu-215, and Thr-243. Arg-478 is modified (asymmetric dimethylarginine; by autocatalysis). 2 disordered regions span residues 513–556 and 602–622; these read ANGG…QQQQ and QPILNSHHHHPGQPIHGNQFY. The segment covering 536–556 has biased composition (low complexity); sequence QQQQQQQQQQQQAAVGPQQQQ.

The protein belongs to the class I-like SAM-binding methyltransferase superfamily. Protein arginine N-methyltransferase family. As to quaternary structure, homodimer. The dimethylated protein is the major form.

The protein localises to the cytoplasm. Its subcellular location is the nucleus. It carries out the reaction L-arginyl-[protein] + 2 S-adenosyl-L-methionine = N(omega),N(omega)-dimethyl-L-arginyl-[protein] + 2 S-adenosyl-L-homocysteine + 2 H(+). Its function is as follows. Methylates (mono- and asymmetric dimethylation) the guanidino nitrogens of arginyl residues in proteins. May methylate histone H3 at 'Arg-17' and activate transcription via chromatin remodeling. This chain is Histone-arginine methyltransferase CARMER, found in Anopheles gambiae (African malaria mosquito).